The sequence spans 560 residues: Excitatory amino acid transporter 5 (560 aa).

The Cytoplasmic segment spans residues Met-1–Arg-16. A run of 3 helical transmembrane segments spans residues Asn-17 to Leu-37, Met-60 to Leu-80, and Ala-94 to Ile-114. Residues His-115–Thr-216 are Extracellular-facing. Asn-191 is a glycosylation site (N-linked (GlcNAc...) asparagine). The next 7 membrane-spanning stretches (helical) occupy residues Ser-217–Gly-237, Ile-260–Ile-280, Val-300–Thr-320, Gly-330–Ile-350, Val-372–Ile-392, Ala-414–Leu-434, and Phe-457–Cys-477.

The protein belongs to the dicarboxylate/amino acid:cation symporter (DAACS) (TC 2.A.23) family. SLC1A7 subfamily. As to quaternary structure, interacts with the PDZ domains of DLG4. Expressed primarily in retina. Detectable in liver, heart, muscle and brain.

The protein resides in the photoreceptor inner segment membrane. It is found in the synaptic cell membrane. It catalyses the reaction K(+)(in) + L-glutamate(out) + 3 Na(+)(out) + H(+)(out) = K(+)(out) + L-glutamate(in) + 3 Na(+)(in) + H(+)(in). The catalysed reaction is K(+)(in) + L-aspartate(out) + 3 Na(+)(out) + H(+)(out) = K(+)(out) + L-aspartate(in) + 3 Na(+)(in) + H(+)(in). It carries out the reaction D-aspartate(out) + K(+)(in) + 3 Na(+)(out) + H(+)(out) = D-aspartate(in) + K(+)(out) + 3 Na(+)(in) + H(+)(in). In terms of biological role, sodium-dependent, high-affinity amino acid transporter that mediates the uptake of L-glutamate and also L-aspartate and D-aspartate. Functions as a symporter that transports one amino acid molecule together with two or three Na(+) ions and one proton, in parallel with the counter-transport of one K(+) ion. Acts primarily as an inhibitory glutamate-gated chloride channel being a major inhibitory presynaptic receptor at mammalian rod bipolar cell axon terminals. Glutamate binding gates a large Cl(-) conductance that mediates inhibition, affecting visual processing in the retina. This is Excitatory amino acid transporter 5 from Homo sapiens (Human).